The primary structure comprises 798 residues: Cold shock domain-containing protein E1 (798 aa).

Met-1 bears the N-acetylmethionine mark. The region spanning 26-87 is the CSD 1 domain; that stretch reads ETGVIEKLLT…RTGKPIAVKL (62 aa). An N6-acetyllysine modification is found at Lys-81. Lys-91 is covalently cross-linked (Glycyl lysine isopeptide (Lys-Gly) (interchain with G-Cter in SUMO2)). At Ser-123 the chain carries Phosphoserine. The CSD 2; truncated domain occupies 136–179; the sequence is VFYLTYTPEDVEGNVQLETGDKINFVIDNNKHTGAVSARNIMLL. The region spanning 186-245 is the CSD 3 domain; that stretch reads CQGVVCAMKEAFGFIERGDVVKEIFFHYSEFKGDLETLQPGDDVEFTIKDRNGKEVATDV. Position 276 is a phosphoserine (Ser-276). The CSD 4; truncated domain maps to 297 to 337; it reads LPFGDKDTKSKVTLLEGDHVRFNISTDRRDKLERATNIEVL. CSD domains lie at 349–410 and 447–507; these read EMGV…AIRI and NKGK…ATCV. Phosphoserine is present on Ser-514. A CSD 7 domain is found at 519 to 579; the sequence is LLGYVATLKD…KGNKVSAEKV (61 aa). The residue at position 584 (Ser-584) is a Phosphoserine. CSD domains lie at 610-670 and 674-735; these read PTQT…AYNI and RRAT…ACNV. The region spanning 748–789 is the SUZ-C domain; sequence PRPDRLVNRLKNITLDDASAPRLMVLRQPRGPDNSMGFGAER. Thr-761 bears the Phosphothreonine mark.

It belongs to the UNR family. In terms of assembly, component of a multi subunit autoregulatory ribonucleoprotein complex (ARC), at least composed of IGF2BP1, PABPC1 and CSDE1. Interacts with STRAP. Part of a complex associated with the FOS mCRD domain and consisting of PABPC1, PAIP1, HNRPD and SYNCRIP. The interaction with PABPC1 is direct and RNA-independent. Interacts with EIF4ENIF1/4E-T.

It is found in the cytoplasm. It localises to the stress granule. The protein localises to the P-body. RNA-binding protein involved in translationally coupled mRNA turnover. Implicated with other RNA-binding proteins in the cytoplasmic deadenylation/translational and decay interplay of the FOS mRNA mediated by the major coding-region determinant of instability (mCRD) domain. Required for efficient formation of stress granules. In terms of biological role, (Microbial infection) Required for internal initiation of translation of human rhinovirus RNA. In Homo sapiens (Human), this protein is Cold shock domain-containing protein E1.